Here is a 662-residue protein sequence, read N- to C-terminus: A-kinase anchor protein 10, mitochondrial (662 aa).

The N-terminal 28 residues, 1-28 (MRGAGPSPRHSPRALRPDPGPAMSFFRR), are a transit peptide targeting the mitochondrion. 3 disordered regions span residues 1 to 55 (MRGA…SPQK), 178 to 205 (KQSS…ALDR), and 242 to 280 (GHSA…NSCS). A compositionally biased stretch (basic and acidic residues) spans 32 to 43 (GKEQEKTLDVKS). Ser52 and Ser189 each carry phosphoserine. 2 RGS domains span residues 125 to 369 (TLEQ…CKYQ) and 379 to 505 (YLAD…YKYL). Positions 256–280 (GSHQIPTDSQDSSSRLAVGSRNSCS) are enriched in polar residues. The residue at position 281 (Ser281) is a Phosphoserine. A PKA-RII subunit binding region spans residues 634 to 647 (LAWKIAKMIVSDVM).

In terms of tissue distribution, highly expressed in testis, kidney and lung, followed by brain, skeletal muscle, liver, spleen and heart. Also expressed in brown adipose tissue and pancreas.

The protein resides in the mitochondrion. The protein localises to the membrane. Its subcellular location is the cytoplasm. Differentially targeted protein that binds to type I and II regulatory subunits of protein kinase A and anchors them to the mitochondria or the plasma membrane. Although the physiological relevance between PKA and AKAPS with mitochondria is not fully understood, one idea is that BAD, a proapoptotic member, is phosphorylated and inactivated by mitochondria-anchored PKA. It cannot be excluded too that it may facilitate PKA as well as G protein signal transduction, by acting as an adapter for assembling multiprotein complexes. With its RGS domain, it could lead to the interaction to G-alpha proteins, providing a link between the signaling machinery and the downstream kinase. This Mus musculus (Mouse) protein is A-kinase anchor protein 10, mitochondrial (Akap10).